Reading from the N-terminus, the 195-residue chain is Nodulin-20a (195 aa).

Residues 1–17 (MRVVLITLFLFIGAAVA) form the signal peptide.

It belongs to the nodulin 20 family.

The protein resides in the symbiosome. It localises to the peribacteroid membrane. It is found in the peribacteroid space. In Glycine max (Soybean), this protein is Nodulin-20a (NOD20A).